A 558-amino-acid polypeptide reads, in one-letter code: Probable beta-glucosidase btgE (558 aa).

Residues 1-18 (MKAAILATAAALTGSALA) form the signal peptide. Disordered regions lie at residues 64–105 (STPS…PETP) and 251–305 (LPSS…QMGM). Composition is skewed to low complexity over residues 76–105 (PETTSTEEVTTTLHSTSTSTVTVTATPETP) and 252–292 (PSSS…SSSA). Residues 293 to 305 (EVPQTTGSGQMGM) are compositionally biased toward polar residues. Catalysis depends on glutamate 399, which acts as the Proton donor. Residue glutamate 495 is the Nucleophile of the active site.

It belongs to the glycosyl hydrolase 17 family.

It localises to the secreted. Its subcellular location is the cell wall. It catalyses the reaction Hydrolysis of terminal, non-reducing beta-D-glucosyl residues with release of beta-D-glucose.. Its pathway is glycan metabolism; cellulose degradation. Beta-glucosidases are one of a number of cellulolytic enzymes involved in the degradation of cellulosic biomass. Catalyzes the last step releasing glucose from the inhibitory cellobiose. The sequence is that of Probable beta-glucosidase btgE (btgE) from Aspergillus terreus (strain NIH 2624 / FGSC A1156).